Here is a 314-residue protein sequence, read N- to C-terminus: Basic leucine zipper 63 (314 aa).

Position 29 is a phosphoserine; by KIN10 (Ser-29). The disordered stretch occupies residues 94–177 (KPQDTSGRSD…SRRRKQAHLS (84 aa)). Residues 96–133 (QDTSGRSDNGGANESEQASLASSKATPMMSSAITSGSE) show a composition bias toward polar residues. Residues 151–214 (NVKRVKRMLS…NDASVENRVL (64 aa)) form the bZIP domain. Residues 153–172 (KRVKRMLSNRESARRSRRRK) are basic motif. The short motif at 155-162 (VKRMLSNR) is the Nuclear localization signal 1 element. Residues 179 to 193 (LETQVSQLRVENSKL) are leucine-zipper. The segment at 253-274 (SLPSETSNSPDTTSSQVTTPEI) is disordered. Residues Ser-294 and Ser-300 each carry the phosphoserine; by KIN10 modification. The Nuclear localization signal 2 signature appears at 295-302 (MRRVESLE).

The protein belongs to the bZIP family. As to quaternary structure, homodimer. Forms a heterodimer with LSD1, BZIP1, BZIP2, BZIP9, BZIP10, BZIP11, BZIP25, BZIP44 and BZIP53. Interacts with KIN10 and SNF4. Component of a ternary complex composed of BZIP2-BZIP63 heterodimer and KIN10. Post-translationally, phosphorylated. The phosphorylation at Ser-29, Ser-294 and Ser-300 by KIN10 strongly enhances its ability to form homo- as well as heterodimers and are then essential for its transcriptional activity. Expressed in roots, shoots, young leaves, pollen, and flowers.

The protein localises to the nucleus. With respect to regulation, up-regulated by KIN10 under a phosphorylation-dependent manner. Transcription factor involved in controlling responses to starvation. BZIP2-BZIP63-KIN10 complex binds to the ETFQO promoter to up-regulate its transcription. In Arabidopsis thaliana (Mouse-ear cress), this protein is Basic leucine zipper 63 (BZIP63).